A 145-amino-acid chain; its full sequence is Large ribosomal subunit protein uL16 (145 aa).

The segment covering 76 to 95 has biased composition (basic and acidic residues); the sequence is PKTKTPAETRMGKGKGEPEH. A disordered region spans residues 76 to 97; the sequence is PKTKTPAETRMGKGKGEPEHFV.

Belongs to the universal ribosomal protein uL16 family. In terms of assembly, part of the 50S ribosomal subunit.

Its function is as follows. Binds 23S rRNA and is also seen to make contacts with the A and possibly P site tRNAs. The protein is Large ribosomal subunit protein uL16 of Salinibacter ruber (strain DSM 13855 / M31).